The following is a 469-amino-acid chain: Glutamate--tRNA ligase (469 aa).

Positions 9–19 (PSPTGFLHVGG) match the 'HIGH' region motif. Residues C98, C100, C125, and D127 each contribute to the Zn(2+) site. The 'KMSKS' region signature appears at 236 to 240 (KLSKR). Residue K239 coordinates ATP.

This sequence belongs to the class-I aminoacyl-tRNA synthetase family. Glutamate--tRNA ligase type 1 subfamily. As to quaternary structure, monomer. Requires Zn(2+) as cofactor.

The protein resides in the cytoplasm. It catalyses the reaction tRNA(Glu) + L-glutamate + ATP = L-glutamyl-tRNA(Glu) + AMP + diphosphate. Its function is as follows. Catalyzes the attachment of glutamate to tRNA(Glu) in a two-step reaction: glutamate is first activated by ATP to form Glu-AMP and then transferred to the acceptor end of tRNA(Glu). This Shewanella loihica (strain ATCC BAA-1088 / PV-4) protein is Glutamate--tRNA ligase.